The following is a 179-amino-acid chain: Large ribosomal subunit protein uL5 (179 aa).

Belongs to the universal ribosomal protein uL5 family. In terms of assembly, part of the 50S ribosomal subunit; part of the 5S rRNA/L5/L18/L25 subcomplex. Contacts the 5S rRNA and the P site tRNA. Forms a bridge to the 30S subunit in the 70S ribosome.

Its function is as follows. This is one of the proteins that bind and probably mediate the attachment of the 5S RNA into the large ribosomal subunit, where it forms part of the central protuberance. In the 70S ribosome it contacts protein S13 of the 30S subunit (bridge B1b), connecting the 2 subunits; this bridge is implicated in subunit movement. Contacts the P site tRNA; the 5S rRNA and some of its associated proteins might help stabilize positioning of ribosome-bound tRNAs. The sequence is that of Large ribosomal subunit protein uL5 from Verminephrobacter eiseniae (strain EF01-2).